We begin with the raw amino-acid sequence, 358 residues long: 3-dehydroquinate synthase (358 aa).

Residues 70–75, 104–108, 128–129, lysine 141, and lysine 150 each bind NAD(+); these read DGEAHK, GVIGD, and TT. Residues glutamate 183, histidine 246, and histidine 263 each coordinate Zn(2+).

The protein belongs to the sugar phosphate cyclases superfamily. Dehydroquinate synthase family. The cofactor is NAD(+). It depends on Co(2+) as a cofactor. Zn(2+) serves as cofactor.

It is found in the cytoplasm. It carries out the reaction 7-phospho-2-dehydro-3-deoxy-D-arabino-heptonate = 3-dehydroquinate + phosphate. It participates in metabolic intermediate biosynthesis; chorismate biosynthesis; chorismate from D-erythrose 4-phosphate and phosphoenolpyruvate: step 2/7. Catalyzes the conversion of 3-deoxy-D-arabino-heptulosonate 7-phosphate (DAHP) to dehydroquinate (DHQ). The polypeptide is 3-dehydroquinate synthase (Bordetella bronchiseptica (strain ATCC BAA-588 / NCTC 13252 / RB50) (Alcaligenes bronchisepticus)).